A 54-amino-acid polypeptide reads, in one-letter code: Large ribosomal subunit protein bL33 (54 aa).

It belongs to the bacterial ribosomal protein bL33 family.

In Roseiflexus castenholzii (strain DSM 13941 / HLO8), this protein is Large ribosomal subunit protein bL33.